Consider the following 906-residue polypeptide: Protein translocase subunit SecA (906 aa).

Residues Gln89, 107 to 111 (GEGKT), and Asp502 each bind ATP. Residues 868-887 (VPPAQRDPADPRTWGKVSRN) are disordered. Cys890, Cys892, Cys901, and His902 together coordinate Zn(2+).

It belongs to the SecA family. As to quaternary structure, monomer and homodimer. Part of the essential Sec protein translocation apparatus which comprises SecA, SecYEG and auxiliary proteins SecDF-YajC and YidC. Zn(2+) is required as a cofactor.

Its subcellular location is the cell inner membrane. It localises to the cytoplasm. It carries out the reaction ATP + H2O + cellular proteinSide 1 = ADP + phosphate + cellular proteinSide 2.. Part of the Sec protein translocase complex. Interacts with the SecYEG preprotein conducting channel. Has a central role in coupling the hydrolysis of ATP to the transfer of proteins into and across the cell membrane, serving both as a receptor for the preprotein-SecB complex and as an ATP-driven molecular motor driving the stepwise translocation of polypeptide chains across the membrane. In Brucella melitensis biotype 1 (strain ATCC 23456 / CCUG 17765 / NCTC 10094 / 16M), this protein is Protein translocase subunit SecA.